Reading from the N-terminus, the 718-residue chain is SANT and BTB domain regulator of class switch recombination (718 aa).

One can recognise an SANT domain in the interval 21–59; it reads DMILYPLIGIPQTINWETVARLVPGLTPKECVKRFDELK. Positions 147–255 constitute a BTB domain; it reads MVIHVCDEAK…QCIQYCHKNM (109 aa). A compositionally biased stretch (acidic residues) spans 555-576; it reads SEEEEYTTGSEVTEDEVGDEEE. 2 disordered regions span residues 555-622 and 690-718; these read SEEE…SPFV and RASV…GRPA. Residues 580–595 show a composition bias toward basic residues; sequence KQRKKEKPKKFTKPPK. Positions 604–615 are enriched in basic and acidic residues; that stretch reads QKKEKTLEKSTS.

It belongs to the KIAA1841 family. As to quaternary structure, homodimer. Interacts (via the BTB domain) with HDAC1 and NCOR2.

In terms of biological role, negatively regulates class switch recombination or isotype switching in splenic B-cells. In Mus musculus (Mouse), this protein is SANT and BTB domain regulator of class switch recombination.